The primary structure comprises 538 residues: Transmembrane protein 266 (538 aa).

Residues 1–102 lie on the Cytoplasmic side of the membrane; that stretch reads MALVTSFNMA…VFLLSASLNS (102 aa). The helical transmembrane segment at 103–123 threads the bilayer; it reads FLVACVILVVILLTLELLIDT. The Extracellular segment spans residues 124 to 130; sequence KLLQFSN. A helical membrane pass occupies residues 131 to 151; that stretch reads AFQFAGVIHWISLVILSVFFS. At 152-169 the chain is on the cytoplasmic side; it reads ETVLRIVVLGIWDYIENK. A helical transmembrane segment spans residues 170–190; sequence IEVFDGAVIILSLAPMVASTV. Over 191-199 the chain is Extracellular; the sequence is ANGPRSPWD. A helical transmembrane segment spans residues 200–220; it reads AISLIIMFRIWRVKRVIDAYV. The Cytoplasmic segment spans residues 221-538; the sequence is LPVKLEMEMV…EPKLHTVPEA (318 aa). The stretch at 232 to 278 forms a coiled coil; it reads QQYEKAKAIQDEQLERLTQICQEQGFEIRQLRAHLAQQDLDLAAERE. Disordered stretches follow at residues 380-435 and 453-483; these read NSTC…PLPL and SSLS…VQTS. Residues 381 to 396 are compositionally biased toward low complexity; sequence STCASATSETTSHSTC. Residues 397-417 are compositionally biased toward polar residues; the sequence is GSVTRAQSASSQTLGSSTDCS. The segment covering 425 to 434 has biased composition (low complexity); the sequence is PSKPRSSPLP.

In terms of assembly, homodimer; disulfide-linked. As to expression, in brain, present in the granule layer of the cerebellar cortex. Localizes on the post-synaptic side of glutamatergic mossy fibers and granule cells in the cerebellum (at protein level). Predominantly expressed in granule cells in cerebellum (at protein level).

The protein resides in the cell projection. Its subcellular location is the dendrite. The protein localises to the perikaryon. It is found in the cell membrane. Its function is as follows. Voltage-sensor protein present on the post-synaptic side of glutamatergic mossy fibers and granule cells in the cerebellum. Despite the presence of a voltage-sensor segment, does not form a functional ion channel and its precise role remains unclear. Undergoes both rapid and slow structural rearrangements in response to changes in voltage. Contains a zinc-binding site that can regulate the slow conformational transition. The chain is Transmembrane protein 266 from Mus musculus (Mouse).